The primary structure comprises 513 residues: Maturase K (513 aa).

The protein belongs to the intron maturase 2 family. MatK subfamily.

It localises to the plastid. It is found in the chloroplast. In terms of biological role, usually encoded in the trnK tRNA gene intron. Probably assists in splicing its own and other chloroplast group II introns. The protein is Maturase K of Arundo donax (Giant reed).